The primary structure comprises 320 residues: G-protein coupled receptor homolog FPV021 (320 aa).

Over 1-18 (MDTDYGTVHTQQSVKGNT) the chain is Extracellular. Residues 19–39 (LILLIYFISFIVGFPGNCTVI) form a helical membrane-spanning segment. Topologically, residues 40-52 (WFTGYRWKKSVTT) are cytoplasmic. A helical membrane pass occupies residues 53–73 (IWFLNLAIADTLFVIFIPFEI). Residues 74 to 91 (TYILMGHYWPFGLFVCRI) lie on the Extracellular side of the membrane. C89 and C167 are joined by a disulfide. A helical transmembrane segment spans residues 92 to 112 (GSLMFNTGMYASIFFLTFISI). Residues 113–133 (DRYCLAFRRDICNKYRYRINI) lie on the Cytoplasmic side of the membrane. A helical transmembrane segment spans residues 134-154 (MVMIIISWIISILLSTPYMYF). At 155-188 (KNTNEKYRNNRDCLEDYHSDNNTYLLRRVVFCIS) the chain is on the extracellular side. N175 carries N-linked (GlcNAc...) asparagine; by host glycosylation. The helical transmembrane segment at 189–209 (LVMRYLVPSVVMLFCYCLLLF) threads the bilayer. Residues 210–222 (KHSLFLSKGQTYT) are Cytoplasmic-facing. Residues 223–243 (IVIMITSFMVLWTPYNILYFI) form a helical membrane-spanning segment. The Extracellular segment spans residues 244 to 260 (DVIGSHYYNADTIIDAA). Residues 261-281 (PISISLIFLSSSINPMIYMLV) traverse the membrane as a helical segment. The Cytoplasmic portion of the chain corresponds to 282–320 (GRYVSFENYSMRESLKLILSEERDNQTNHENEIKMENIN).

This sequence belongs to the G-protein coupled receptor 1 family.

Its subcellular location is the host cell membrane. The polypeptide is G-protein coupled receptor homolog FPV021 (Vertebrata (FPV)).